Reading from the N-terminus, the 399-residue chain is Semaphorin-like protein 139 (399 aa).

The first 14 residues, 1–14 (MIPLLFILFYFTNC), serve as a signal peptide directing secretion. Positions 15-399 (IEWHKFETSE…IPRMKKILKM (385 aa)) constitute a Sema domain.

This sequence belongs to the semaphorin family. Interacts with host VESPR.

Its subcellular location is the secreted. Acts as a semaphorin-like protein and binds to host plexin C1 receptor. May alter the movement of plexin C1-expressing cells including dendritic cells, monocytes, or granulocytes in the proximity of infected cells. May also regulate host cell cytoskeleton of neighboring cells to improve viral infection. This is Semaphorin-like protein 139 (EVM139) from Ectromelia virus (strain Moscow) (ECTV).